A 243-amino-acid chain; its full sequence is Vesicle-associated membrane protein-associated protein B (243 aa).

N-acetylalanine is present on A2. At 2–218 (AKVEQVLSLE…PAPATPGKEE (217 aa)) the chain is on the cytoplasmic side. Residues 7–124 (VLSLEPQHEL…MDSKLRCVFE (118 aa)) enclose the MSP domain. The residue at position 146 (S146) is a Phosphoserine. Residue K147 forms a Glycyl lysine isopeptide (Lys-Gly) (interchain with G-Cter in SUMO1) linkage. T150 is modified (phosphothreonine). Phosphoserine is present on residues S158 and S159. A coiled-coil region spans residues 161 to 196 (LDDTEVKKVMEECKRLQSEVQRLREENKQLKEEDGL). Over residues 185–197 (EENKQLKEEDGLR) the composition is skewed to basic and acidic residues. The segment at 185–217 (EENKQLKEEDGLRMRKPVLSNSPAPAPATPGKE) is disordered. S206 bears the Phosphoserine mark. A helical; Anchor for type IV membrane protein transmembrane segment spans residues 219-239 (GLSTRLLALVVLFFIVGVIIG).

It belongs to the VAMP-associated protein (VAP) (TC 9.B.17) family. As to quaternary structure, homodimer, and heterodimer with VAPA. Interacts with VAMP1 and VAMP2. Interacts (via MSP domain) with ZFYVE27. Interacts with RMDN3. Interacts with KIF5A in a ZFYVE27-dependent manner. Interacts (via MSP domain) with STARD3 (via phospho-FFAT motif). Interacts with STARD3NL (via FFAT motif). Interacts with CERT1. Interacts with PLEKHA3 and SACM1L to form a ternary complex. Interacts with VPS13A (via FFAT motif). Interacts with RB1CC1 (via phosphorylated FFAT motif), MIGA2 (via phosphorylated FFAT motif), RMDN3 (via phosphorylated FFAT motif), OSBPL1A (via FFAT motif), KCNB1 (via phosphorylated FFAT motif) and KCNB2 (via phosphorylated FFAT motif). Interacts (via MSP domain) with WDR44 (via FFAT motif); the interactions connect the endoplasmic reticulum (ER) with the endosomal tubule.

It is found in the endoplasmic reticulum membrane. Its function is as follows. Endoplasmic reticulum (ER)-anchored protein that mediates the formation of contact sites between the ER and endosomes via interaction with FFAT motif-containing proteins such as STARD3 or WDR44. Interacts with STARD3 in a FFAT motif phosphorylation dependent manner. Via interaction with WDR44 participates in neosynthesized protein export. Participates in the endoplasmic reticulum unfolded protein response (UPR) by inducing ERN1/IRE1 activity. Involved in cellular calcium homeostasis regulation. The protein is Vesicle-associated membrane protein-associated protein B of Sus scrofa (Pig).